A 649-amino-acid chain; its full sequence is Vitamin K-dependent protein S (649 aa).

Positions 1–14 (SKQQASQVLVRKRR) are excised as a propeptide. In terms of domain architecture, Gla spans 15–60 (ANSMLEETKQGNLERECIEELCNKEEAREVFENDPETDYFYPKYLV). 4-carboxyglutamate occurs at positions 20, 21, 28, 30, 33, 34, 39, 40, 43, 46, and 50. A disulfide bridge links cysteine 31 with cysteine 36. The interval 61–89 (CLRSFQSGLFTAARQSTDAYPDLRSCVNA) is thrombin-sensitive. Residues 90–128 (IPDQCSPLPCNEDGYMSCKDGKASFTCTCKPGWQGERCE) form the EGF-like 1 domain. Cystine bridges form between cysteine 94–cysteine 107, cysteine 99–cysteine 116, cysteine 118–cysteine 127, cysteine 134–cysteine 148, cysteine 144–cysteine 157, cysteine 159–cysteine 172, cysteine 178–cysteine 190, cysteine 185–cysteine 199, cysteine 201–cysteine 214, cysteine 220–cysteine 229, cysteine 225–cysteine 238, cysteine 240–cysteine 255, and cysteine 422–cysteine 448. A (3R)-3-hydroxyaspartate modification is found at aspartate 109. In terms of domain architecture, EGF-like 2; calcium-binding spans 130-173 (DINECKDPSNINGGCSQICDNTPGSYHCSCKSGFVMLSNKKDCK). The 42-residue stretch at 174 to 215 (DVDECSLKPNMCGTAVCKNIPGDFECECPEGYRYNLKSKSCE) folds into the EGF-like 3; calcium-binding domain. The 41-residue stretch at 216–256 (DVDECSENMCAQLCVNYPGGYTCYCDGKKGFKLAQDQKSCE) folds into the EGF-like 4; calcium-binding domain. Laminin G-like domains lie at 272–448 (LLYL…NKHC) and 457–639 (YYPG…AHSC). 3 N-linked (GlcNAc...) asparagine glycosylation sites follow: asparagine 472, asparagine 482, and asparagine 503. An intrachain disulfide couples cysteine 612 to cysteine 639.

In terms of processing, the iron and 2-oxoglutarate dependent 3-hydroxylation of aspartate and asparagine is (R) stereospecific within EGF domains. In terms of tissue distribution, plasma.

It localises to the secreted. Its function is as follows. Anticoagulant plasma protein; it is a cofactor to activated protein C in the degradation of coagulation factors Va and VIIIa. It helps to prevent coagulation and stimulating fibrinolysis. This is Vitamin K-dependent protein S (PROS1) from Macaca mulatta (Rhesus macaque).